Reading from the N-terminus, the 114-residue chain is Large ribosomal subunit protein bL19 (114 aa).

It belongs to the bacterial ribosomal protein bL19 family.

Functionally, this protein is located at the 30S-50S ribosomal subunit interface and may play a role in the structure and function of the aminoacyl-tRNA binding site. This chain is Large ribosomal subunit protein bL19, found in Halalkalibacterium halodurans (strain ATCC BAA-125 / DSM 18197 / FERM 7344 / JCM 9153 / C-125) (Bacillus halodurans).